The chain runs to 500 residues: Endothelial lipase (500 aa).

A signal peptide spans 1-20; the sequence is MSNSVPLLCFWSLCYCFAAG. Residues C64 and C77 are joined by a disulfide bond. Residues N80 and N136 are each glycosylated (N-linked (GlcNAc...) asparagine). S169 functions as the Nucleophile in the catalytic mechanism. The Charge relay system role is filled by D193. The cysteines at positions 252 and 272 are disulfide-linked. Catalysis depends on H274, which acts as the Charge relay system. Cystine bridges form between C297–C316 and C308–C311. 325–337 contributes to the heparin binding site; sequence KMRNKRNSKMYLK. Positions 347 to 482 constitute a PLAT domain; that stretch reads YHYQMKIHVF…SPGRELWFRK (136 aa). N393, N469, and N491 each carry an N-linked (GlcNAc...) asparagine glycan. C463 and C483 are joined by a disulfide.

This sequence belongs to the AB hydrolase superfamily. Lipase family. Head to tail homodimer. In terms of tissue distribution, high level of expression in the liver, placenta, lung, thyroid, kidney, testis and in the corpus luteum of the ovary. Expressed also in coronary artery endothelial cells, umbilical vein endothelial cells and in hepatocytes and osteosarcoma cell lines. Not detected in heart, brain and muscle.

Its subcellular location is the secreted. The enzyme catalyses a triacylglycerol + H2O = a diacylglycerol + a fatty acid + H(+). It carries out the reaction a 1,2-diacyl-sn-glycero-3-phosphocholine + H2O = a 2-acyl-sn-glycero-3-phosphocholine + a fatty acid + H(+). The catalysed reaction is 1,2,3-tri-(9Z-octadecenoyl)-glycerol + H2O = di-(9Z)-octadecenoylglycerol + (9Z)-octadecenoate + H(+). It catalyses the reaction 1,2,3-tributanoylglycerol + H2O = dibutanoylglycerol + butanoate + H(+). The enzyme catalyses 1,2-dihexadecanoyl-sn-glycero-3-phosphocholine + H2O = hexadecanoyl-sn-glycero-3-phosphocholine + hexadecanoate + H(+). Its activity is regulated as follows. Inhibited by serum and NaCl. Exerts both phospholipase and triglyceride lipase activities. More active as a phospholipase than a triglyceride lipase. Hydrolyzes triglycerides, both with short-chain fatty acyl groups (tributyrin) and long-chain fatty acyl groups (triolein) with similar levels of activity toward both types of substrates. Hydrolyzes high density lipoproteins (HDL) more efficiently than other lipoproteins. The chain is Endothelial lipase (LIPG) from Homo sapiens (Human).